The following is a 586-amino-acid chain: A-type ATP synthase subunit A (586 aa).

ATP is bound at residue 238-245 (GPFGSGKT).

It belongs to the ATPase alpha/beta chains family. Has multiple subunits with at least A(3), B(3), C, D, E, F, H, I and proteolipid K(x).

Its subcellular location is the cell membrane. The enzyme catalyses ATP + H2O + 4 H(+)(in) = ADP + phosphate + 5 H(+)(out). Component of the A-type ATP synthase that produces ATP from ADP in the presence of a proton gradient across the membrane. The A chain is the catalytic subunit. This Haloferax volcanii (strain ATCC 29605 / DSM 3757 / JCM 8879 / NBRC 14742 / NCIMB 2012 / VKM B-1768 / DS2) (Halobacterium volcanii) protein is A-type ATP synthase subunit A.